Consider the following 464-residue polypeptide: tRNA modification GTPase MnmE (464 aa).

(6S)-5-formyl-5,6,7,8-tetrahydrofolate-binding residues include Arg-25, Glu-87, and Lys-130. Residues 226 to 386 form the TrmE-type G domain; that stretch reads GLSVVLAGQP…LRAELLRIAG (161 aa). Residue Asn-236 participates in K(+) binding. GTP contacts are provided by residues 236–241, 255–261, and 280–283; these read NVGKSS, TPIAGTT, and DTAG. Ser-240 is a Mg(2+) binding site. The K(+) site is built by Thr-255, Ile-257, and Thr-260. Thr-261 is a Mg(2+) binding site. Lys-464 is a (6S)-5-formyl-5,6,7,8-tetrahydrofolate binding site.

It belongs to the TRAFAC class TrmE-Era-EngA-EngB-Septin-like GTPase superfamily. TrmE GTPase family. As to quaternary structure, homodimer. Heterotetramer of two MnmE and two MnmG subunits. K(+) serves as cofactor.

The protein localises to the cytoplasm. In terms of biological role, exhibits a very high intrinsic GTPase hydrolysis rate. Involved in the addition of a carboxymethylaminomethyl (cmnm) group at the wobble position (U34) of certain tRNAs, forming tRNA-cmnm(5)s(2)U34. The sequence is that of tRNA modification GTPase MnmE from Burkholderia orbicola (strain MC0-3).